Consider the following 368-residue polypeptide: 3-dehydroquinate synthase (368 aa).

NAD(+)-binding positions include 110–114 (GVIGD), 134–135 (TS), K147, and K156. Zn(2+)-binding residues include E189, H254, and H271.

Belongs to the sugar phosphate cyclases superfamily. Dehydroquinate synthase family. NAD(+) is required as a cofactor. Co(2+) serves as cofactor. Requires Zn(2+) as cofactor.

The protein localises to the cytoplasm. The enzyme catalyses 7-phospho-2-dehydro-3-deoxy-D-arabino-heptonate = 3-dehydroquinate + phosphate. Its pathway is metabolic intermediate biosynthesis; chorismate biosynthesis; chorismate from D-erythrose 4-phosphate and phosphoenolpyruvate: step 2/7. Functionally, catalyzes the conversion of 3-deoxy-D-arabino-heptulosonate 7-phosphate (DAHP) to dehydroquinate (DHQ). This chain is 3-dehydroquinate synthase, found in Thermosynechococcus vestitus (strain NIES-2133 / IAM M-273 / BP-1).